Consider the following 449-residue polypeptide: Gamma-aminobutyric acid receptor subunit delta (449 aa).

Residues 1 to 24 (MDVLGWLLLPLLLLCTQPHHGARA) form the signal peptide. The Extracellular portion of the chain corresponds to 25–251 (MNDIGDYVGS…QLRRNRGVYI (227 aa)). N-linked (GlcNAc...) asparagine glycans are attached at residues Asn103 and Asn106. A disulfide bridge links Cys164 with Cys178. Residues 252 to 271 (IQSYMPSVLLVAMSWVSFWI) traverse the membrane as a helical segment. The Cytoplasmic portion of the chain corresponds to 272 to 275 (SQAA). Residues 276–298 (VPARVSLGITTVLTMTTLMVSAR) traverse the membrane as a helical segment. The Extracellular segment spans residues 299-308 (SSLPRASAIK). Residues 309–331 (ALDVYFWICYVFVFAALVEYAFA) traverse the membrane as a helical segment. The Cytoplasmic portion of the chain corresponds to 332-423 (HFNADYRKKR…SRLKPIDADT (92 aa)). Ser390 is modified (phosphoserine). Residues 424-446 (IDIYARAVFPAAFAAVNIIYWAA) traverse the membrane as a helical segment. Topologically, residues 447-449 (YTM) are extracellular.

The protein belongs to the ligand-gated ion channel (TC 1.A.9) family. Gamma-aminobutyric acid receptor (TC 1.A.9.5) subfamily. GABRD sub-subfamily. Heteropentamer, formed by a combination of alpha (GABRA1-6), beta (GABRB1-3), gamma (GABRG1-3), delta (GABRD), epsilon (GABRE), rho (GABRR1-3), pi (GABRP) and theta (GABRQ) chains, each subunit exhibiting distinct physiological and pharmacological properties.

The protein resides in the cell membrane. The enzyme catalyses chloride(in) = chloride(out). Functionally, delta subunit of the heteropentameric ligand-gated chloride channel gated by gamma-aminobutyric acid (GABA), a major inhibitory neurotransmitter in the brain. GABA-gated chloride channels, also named GABA(A) receptors (GABAAR), consist of five subunits arranged around a central pore and contain GABA active binding site(s) located at the alpha and beta subunit interface(s). When activated by GABA, GABAARs selectively allow the flow of chloride anions across the cell membrane down their electrochemical gradient. GABAARs containing delta/GABRD subunits are predominantly expressed and located in extrasynaptic or perisynaptic positions on hippocampus and cerebellar granule cells, and contribute to the tonic GABAergic inhibition. GABAAR containing alpha-4-beta-3-delta subunits can simultaneously bind GABA and histamine where histamine binds at the interface of two neighboring beta subunits, which may be involved in the regulation of sleep and wakefulness. The protein is Gamma-aminobutyric acid receptor subunit delta of Mus musculus (Mouse).